A 469-amino-acid chain; its full sequence is 3-isopropylmalate dehydratase large subunit (469 aa).

Residues cysteine 347, cysteine 407, and cysteine 410 each contribute to the [4Fe-4S] cluster site.

It belongs to the aconitase/IPM isomerase family. LeuC type 1 subfamily. As to quaternary structure, heterodimer of LeuC and LeuD. [4Fe-4S] cluster serves as cofactor.

The catalysed reaction is (2R,3S)-3-isopropylmalate = (2S)-2-isopropylmalate. It participates in amino-acid biosynthesis; L-leucine biosynthesis; L-leucine from 3-methyl-2-oxobutanoate: step 2/4. Catalyzes the isomerization between 2-isopropylmalate and 3-isopropylmalate, via the formation of 2-isopropylmaleate. The polypeptide is 3-isopropylmalate dehydratase large subunit (Sorangium cellulosum (strain So ce56) (Polyangium cellulosum (strain So ce56))).